The following is a 416-amino-acid chain: CinA-like protein (416 aa).

This sequence belongs to the CinA family.

This chain is CinA-like protein, found in Nostoc punctiforme (strain ATCC 29133 / PCC 73102).